The primary structure comprises 323 residues: Aldo-keto reductase family 1 member C21 (323 aa).

20–24 provides a ligand contact to NADP(+); it reads GFGTA. K31 serves as a coordination point for substrate. D50 is an NADP(+) binding site. Y55 functions as the Proton donor in the catalytic mechanism. Residue H117 coordinates substrate. NADP(+) contacts are provided by residues 166-167, Q190, 216-224, and 270-280; these read SN, YGVLGTQRY, and TSLKEERIKEN.

Belongs to the aldo/keto reductase family. Monomer. As to expression, detected in kidney and brain.

Its subcellular location is the cytoplasm. The catalysed reaction is androsterone + NADP(+) = 5alpha-androstan-3,17-dione + NADPH + H(+). It catalyses the reaction androsterone + NAD(+) = 5alpha-androstan-3,17-dione + NADH + H(+). Inhibited by high concentrations of substrate. In terms of biological role, NADP-dependent 17-alpha-hydroxysteroid dehydrogenase that converts 5-alpha-androstane-3,17-dione into androsterone. Has lower 3-alpha-hydroxysteroid dehydrogenase activity. Has broad substrate specificity and acts on various 17-alpha-hydroxysteroids, 17-ketosteroids, 3-alpha hydroxysteroids and 3-ketosteroids. Reduction of keto groups is strictly stereoselective. Reduction of 17-ketosteroids yields only 17-alpha-hydroxysteroids. Likewise, reduction of 3-ketosteroids yields only 3-alpha-hydroxysteroids. The sequence is that of Aldo-keto reductase family 1 member C21 (Akr1c21) from Mus musculus (Mouse).